The chain runs to 1008 residues: ATP-dependent zinc metalloprotease FTSH 12, chloroplastic (1008 aa).

Residues 1 to 49 constitute a chloroplast transit peptide; that stretch reads MEIAISYKPNPLISSSTQLLKRSKSFGLVRFPAKYGLGATRKKQLFRVY. 2 helical membrane-spanning segments follow: residues 154–174 and 427–447; these read AALFIYAFALLLSCQRVYVAI and IHYFMKVFIALLPGILILWFI. Residue 533–540 coordinates ATP; it reads GPPGTGKT. His769 contacts Zn(2+). Residue Glu770 is part of the active site. Zn(2+) contacts are provided by His773 and Asp849.

The protein in the N-terminal section; belongs to the AAA ATPase family. This sequence in the C-terminal section; belongs to the peptidase M41 family. It depends on Zn(2+) as a cofactor.

It is found in the plastid. The protein localises to the chloroplast thylakoid membrane. Probable ATP-dependent zinc metallopeptidase. The chain is ATP-dependent zinc metalloprotease FTSH 12, chloroplastic (FTSH12) from Arabidopsis thaliana (Mouse-ear cress).